Consider the following 282-residue polypeptide: Small ribosomal subunit protein uS2 (282 aa).

Residues 260–282 form a disordered region; the sequence is KRRRSKVYKEEEREVVTNEDESR. Basic and acidic residues predominate over residues 266-282; the sequence is VYKEEEREVVTNEDESR.

This sequence belongs to the universal ribosomal protein uS2 family.

The polypeptide is Small ribosomal subunit protein uS2 (Wolbachia pipientis wMel).